The sequence spans 381 residues: Succinyl-diaminopimelate desuccinylase (381 aa).

Zn(2+) is bound at residue histidine 69. The active site involves aspartate 71. Aspartate 103 is a binding site for Zn(2+). Glutamate 137 functions as the Proton acceptor in the catalytic mechanism. Positions 138, 166, and 355 each coordinate Zn(2+).

This sequence belongs to the peptidase M20A family. DapE subfamily. As to quaternary structure, homodimer. Zn(2+) serves as cofactor. Co(2+) is required as a cofactor.

It catalyses the reaction N-succinyl-(2S,6S)-2,6-diaminopimelate + H2O = (2S,6S)-2,6-diaminopimelate + succinate. It participates in amino-acid biosynthesis; L-lysine biosynthesis via DAP pathway; LL-2,6-diaminopimelate from (S)-tetrahydrodipicolinate (succinylase route): step 3/3. Its function is as follows. Catalyzes the hydrolysis of N-succinyl-L,L-diaminopimelic acid (SDAP), forming succinate and LL-2,6-diaminopimelate (DAP), an intermediate involved in the bacterial biosynthesis of lysine and meso-diaminopimelic acid, an essential component of bacterial cell walls. In Rickettsia felis (strain ATCC VR-1525 / URRWXCal2) (Rickettsia azadi), this protein is Succinyl-diaminopimelate desuccinylase.